We begin with the raw amino-acid sequence, 417 residues long: Serine hydroxymethyltransferase (417 aa).

(6S)-5,6,7,8-tetrahydrofolate-binding positions include L121 and 125–127 (GHL). The residue at position 229 (K229) is an N6-(pyridoxal phosphate)lysine. 355–357 (SPF) is a binding site for (6S)-5,6,7,8-tetrahydrofolate.

It belongs to the SHMT family. In terms of assembly, homodimer. Pyridoxal 5'-phosphate serves as cofactor.

It is found in the cytoplasm. The catalysed reaction is (6R)-5,10-methylene-5,6,7,8-tetrahydrofolate + glycine + H2O = (6S)-5,6,7,8-tetrahydrofolate + L-serine. It functions in the pathway one-carbon metabolism; tetrahydrofolate interconversion. Its pathway is amino-acid biosynthesis; glycine biosynthesis; glycine from L-serine: step 1/1. In terms of biological role, catalyzes the reversible interconversion of serine and glycine with tetrahydrofolate (THF) serving as the one-carbon carrier. This reaction serves as the major source of one-carbon groups required for the biosynthesis of purines, thymidylate, methionine, and other important biomolecules. Also exhibits THF-independent aldolase activity toward beta-hydroxyamino acids, producing glycine and aldehydes, via a retro-aldol mechanism. The sequence is that of Serine hydroxymethyltransferase from Shewanella sp. (strain W3-18-1).